The primary structure comprises 1512 residues: DNA polymerase (1512 aa).

This sequence belongs to the DNA polymerase type-B family.

It localises to the host nucleus. The catalysed reaction is DNA(n) + a 2'-deoxyribonucleoside 5'-triphosphate = DNA(n+1) + diphosphate. The chain is DNA polymerase (57/58) from Ictalurid herpesvirus 1 (strain Auburn) (IcHV-1).